We begin with the raw amino-acid sequence, 449 residues long: Acetolactate synthase small subunit 1, chloroplastic (449 aa).

The N-terminal 30 residues, 1–30 (MEHIQTRTTLSQLSTLPSDKRLGAIRFKCL), are a transit peptide targeting the chloroplast. ACT domains follow at residues 31 to 98 (LVMK…DLSK) and 259 to 333 (TLSM…DITH).

It belongs to the acetolactate synthase small subunit family. As to quaternary structure, the acetolactate synthase complex contains both large catalytic subunits and small regulatory subunits.

The protein localises to the plastid. It localises to the chloroplast. It participates in amino-acid biosynthesis; L-isoleucine biosynthesis; L-isoleucine from 2-oxobutanoate: step 1/4. The protein operates within amino-acid biosynthesis; L-valine biosynthesis; L-valine from pyruvate: step 1/4. Functionally, regulatory subunit of acetohydroxy-acid synthase. Probably involved in feedback inhibition by branched-chain amino acids. Not involved in herbicide tolerance. The sequence is that of Acetolactate synthase small subunit 1, chloroplastic from Nicotiana plumbaginifolia (Leadwort-leaved tobacco).